The primary structure comprises 568 residues: Phosphomethylpyrimidine synthase (568 aa).

Substrate is bound by residues Asn188, Met217, Tyr246, His282, 302–304, 343–346, and Glu382; these read SRG and DGLR. His386 is a Zn(2+) binding site. Tyr409 provides a ligand contact to substrate. Zn(2+) is bound at residue His450. [4Fe-4S] cluster contacts are provided by Cys530, Cys533, and Cys538.

This sequence belongs to the ThiC family. As to quaternary structure, homodimer. The cofactor is [4Fe-4S] cluster.

The catalysed reaction is 5-amino-1-(5-phospho-beta-D-ribosyl)imidazole + S-adenosyl-L-methionine = 4-amino-2-methyl-5-(phosphooxymethyl)pyrimidine + CO + 5'-deoxyadenosine + formate + L-methionine + 3 H(+). It functions in the pathway cofactor biosynthesis; thiamine diphosphate biosynthesis. In terms of biological role, catalyzes the synthesis of the hydroxymethylpyrimidine phosphate (HMP-P) moiety of thiamine from aminoimidazole ribotide (AIR) in a radical S-adenosyl-L-methionine (SAM)-dependent reaction. The sequence is that of Phosphomethylpyrimidine synthase from Idiomarina loihiensis (strain ATCC BAA-735 / DSM 15497 / L2-TR).